The chain runs to 306 residues: Aspartate carbamoyltransferase catalytic subunit (306 aa).

Residues Arg-55 and Thr-56 each coordinate carbamoyl phosphate. An L-aspartate-binding site is contributed by Lys-84. Arg-105, His-133, and Gln-136 together coordinate carbamoyl phosphate. The L-aspartate site is built by Arg-166 and Arg-227. Carbamoyl phosphate-binding residues include Leu-265 and Pro-266.

The protein belongs to the aspartate/ornithine carbamoyltransferase superfamily. ATCase family. In terms of assembly, heterododecamer (2C3:3R2) of six catalytic PyrB chains organized as two trimers (C3), and six regulatory PyrI chains organized as three dimers (R2).

It carries out the reaction carbamoyl phosphate + L-aspartate = N-carbamoyl-L-aspartate + phosphate + H(+). Its pathway is pyrimidine metabolism; UMP biosynthesis via de novo pathway; (S)-dihydroorotate from bicarbonate: step 2/3. Its function is as follows. Catalyzes the condensation of carbamoyl phosphate and aspartate to form carbamoyl aspartate and inorganic phosphate, the committed step in the de novo pyrimidine nucleotide biosynthesis pathway. The polypeptide is Aspartate carbamoyltransferase catalytic subunit (Neisseria gonorrhoeae (strain ATCC 700825 / FA 1090)).